Reading from the N-terminus, the 135-residue chain is Ribosome-binding factor A (135 aa).

The protein belongs to the RbfA family. In terms of assembly, monomer. Binds 30S ribosomal subunits, but not 50S ribosomal subunits or 70S ribosomes.

It is found in the cytoplasm. Its function is as follows. One of several proteins that assist in the late maturation steps of the functional core of the 30S ribosomal subunit. Associates with free 30S ribosomal subunits (but not with 30S subunits that are part of 70S ribosomes or polysomes). Required for efficient processing of 16S rRNA. May interact with the 5'-terminal helix region of 16S rRNA. The chain is Ribosome-binding factor A from Dinoroseobacter shibae (strain DSM 16493 / NCIMB 14021 / DFL 12).